Here is a 327-residue protein sequence, read N- to C-terminus: Zinc transport protein ZntB (327 aa).

At 1–273 (MEAIKGSDVN…ARRTYTMSLM (273 aa)) the chain is on the cytoplasmic side. The helical transmembrane segment at 274-294 (AMVFLPSTFLTGLFGVNLGGI) threads the bilayer. Over 295–300 (PGGGWQ) the chain is Periplasmic. The helical transmembrane segment at 301-321 (FGFSIFCILLVVLIGGVALWL) threads the bilayer. Residues 322–327 (HRSKWL) lie on the Cytoplasmic side of the membrane.

It belongs to the CorA metal ion transporter (MIT) (TC 1.A.35) family.

Its subcellular location is the cell inner membrane. It catalyses the reaction Zn(2+)(out) + H(+)(out) = Zn(2+)(in) + H(+)(in). Zinc transporter. Acts as a Zn(2+):proton symporter, which likely mediates zinc ion uptake. The chain is Zinc transport protein ZntB from Escherichia coli O139:H28 (strain E24377A / ETEC).